Consider the following 3103-residue polypeptide: Extracellular matrix protein 3 (3103 aa).

An N-terminal signal peptide occupies residues 1–19; that stretch reads MASALLCFLAAILPGMIAA. The Extracellular portion of the chain corresponds to 20–3047; that stretch reads QNTWVLGTSD…TYELAPKGTN (3028 aa). CSPG repeat units lie at residues 289–388, 411–499, 520–630, 656–762, 784–875, 901–993, 1022–1124, 1145–1238, 1259–1357, 1378–1470, 1490–1579, and 1613–1710; these read PPSL…LEIV, APVV…FRMT, APIV…FRVV, PPEM…FVVQ, QPPT…LEIT, LPPG…LTLS, APNV…FRCT, EEPQ…VLLT, TPRL…FDIT, VHPS…FQVT, KEPV…FIVT, and APQI…VEVR. Asn-330 and Asn-453 each carry an N-linked (GlcNAc...) asparagine glycan. N-linked (GlcNAc...) asparagine glycans are attached at residues Asn-989, Asn-1024, Asn-1042, Asn-1207, Asn-1294, Asn-1321, and Asn-1327. Residues Asn-1542, Asn-1674, Asn-1679, Asn-1725, and Asn-1739 are each glycosylated (N-linked (GlcNAc...) asparagine). Calx-beta domains are found at residues 1717 to 1816, 1829 to 1942, 1956 to 2062, and 2077 to 2179; these read LPNQ…IILH, AVVT…VKLS, NVII…LVLN, and ITIN…LVLG. N-linked (GlcNAc...) asparagine glycosylation is found at Asn-2080, Asn-2195, Asn-2274, Asn-2385, and Asn-2932. Residues 2197–2302 form the Calx-beta 5 domain; that stretch reads TVVTVHDVGD…MREAFTLHIT (106 aa). A disordered region spans residues 2983-3013; it reads SSGIGKRETEHHAISSRQRRQANSEALVDPA. Residues 3048-3068 form a helical membrane-spanning segment; sequence VVMIAVVIGVILIILLVALVI. Topologically, residues 3069-3103 are cytoplasmic; the sequence is GVVVRRRQAKQQPVVVVNGSAKVVSNVHFDDNTEV.

This sequence belongs to the FRAS1 family. Component of extracellular matrix fibers that interact with PMC filopodia during gastrulation (at protein level).

It is found in the cell membrane. In terms of biological role, extracellular matrix protein that may serve as substrate for the migratory primary mesenchyme cells (PMCs), the interaction possibly providing guidance information to migrating PMCs. The polypeptide is Extracellular matrix protein 3 (ECM3) (Lytechinus variegatus (Green sea urchin)).